The following is a 637-amino-acid chain: Multicopper oxidase LPR1 homolog 5 (637 aa).

The N-terminal stretch at 1 to 21 (MSPRIQQLAAVLLAAVVVVAA) is a signal peptide. The N-linked (GlcNAc...) asparagine glycan is linked to asparagine 100. Cu cation is bound by residues histidine 209 and histidine 211. An N-linked (GlcNAc...) asparagine glycan is attached at asparagine 234. Cu cation contacts are provided by histidine 257 and histidine 259. 6 N-linked (GlcNAc...) asparagine glycosylation sites follow: asparagine 308, asparagine 349, asparagine 357, asparagine 425, asparagine 482, and asparagine 516. One can recognise a Plastocyanin-like domain in the interval 334–406 (PYLSVQRRRY…IVDFSRLPAA (73 aa)). The Cu cation site is built by histidine 522, histidine 525, and histidine 527. An N-linked (GlcNAc...) asparagine glycan is attached at asparagine 553. The Cu cation site is built by histidine 618, cysteine 619, histidine 620, histidine 624, and methionine 629.

Belongs to the multicopper oxidase family. Requires Cu cation as cofactor. Highly expressed in roots and basal stems.

Its subcellular location is the endoplasmic reticulum membrane. In terms of biological role, multicopper oxidase that may play a role in the maintenance of inorganic phosphate homeostasis. In Oryza sativa subsp. japonica (Rice), this protein is Multicopper oxidase LPR1 homolog 5.